Reading from the N-terminus, the 561-residue chain is Putative transport protein YbjL (561 aa).

The next 5 membrane-spanning stretches (helical) occupy residues Leu8–Gly28, Leu32–Gln52, Phe66–Phe86, Met94–Phe114, and Asn158–Ala178. RCK C-terminal domains follow at residues Arg200–Asn288 and Val292–Phe373. 5 helical membrane passes run Leu383–Phe403, Phe406–Leu426, Phe447–Gly467, Met475–Ala495, and Ala540–Leu560.

The protein belongs to the AAE transporter (TC 2.A.81) family. YbjL subfamily.

Its subcellular location is the cell membrane. The sequence is that of Putative transport protein YbjL from Salmonella typhi.